The primary structure comprises 1337 residues: Nucleoporin POM152 (1337 aa).

Positions 1-48 are disordered; the sequence is MEHRYNVFNDTPRGNHWMGSSVSGSPRPSYSSRPNVNTTRRFQYSDDE. Residues 1-110 are Cytoplasmic-facing; it reads MEHRYNVFND…TDVLEISKQR (110 aa). The segment at 1–175 is pore side; sequence MEHRYNVFND…SFNIPRLTFK (175 aa). Low complexity predominate over residues 19–37; sequence GSSVSGSPRPSYSSRPNVN. Ser45 and Ser60 each carry phosphoserine. The helical transmembrane segment at 111-131 threads the bilayer; the sequence is TFAVILFLIIQCYKIYDLVIL. Residues 132–148 are Perinuclear space-facing; that stretch reads KSGLPLSGLLFKNYRFN. The helical transmembrane segment at 149–169 threads the bilayer; the sequence is FISKYFIIDSFFLYVLPSFNI. Residues 170 to 172 are Cytoplasmic-facing; the sequence is PRL. A helical membrane pass occupies residues 173-193; it reads TFKPWVVYLQILAMLLLNIFI. Residues 194-1337 are Perinuclear space-facing; that stretch reads SSDHEFVLIS…FAKNDLFFNN (1144 aa). The interval 196-1337 is cisternal side; sequence DHEFVLISLI…FAKNDLFFNN (1142 aa). The N-linked (GlcNAc...) asparagine glycan is linked to Asn280. Tandem repeats lie at residues 390–413, 626–650, 732–755, 836–859, 943–966, 1058–1077, 1157–1178, and 1253–1276. The interval 390–1276 is 8 X 24 AA approximate repeats; the sequence is DRCIGDSDNV…EGTPPFSLTY (887 aa).

As to quaternary structure, component of the nuclear pore complex (NPC). NPC constitutes the exclusive means of nucleocytoplasmic transport. NPCs allow the passive diffusion of ions and small molecules and the active, nuclear transport receptor-mediated bidirectional transport of macromolecules such as proteins, RNAs, ribonucleoparticles (RNPs), and ribosomal subunits across the nuclear envelope. Due to its 8-fold rotational symmetry, all subunits are present with 8 copies or multiples thereof. Interacts with NUP188. In terms of processing, the N-terminus is blocked. Phosphorylated by CDC28.

The protein localises to the nucleus. Its subcellular location is the nuclear pore complex. It localises to the nucleus membrane. In terms of biological role, functions as a component of the nuclear pore complex (NPC). NPC components, collectively referred to as nucleoporins (NUPs), can play the role of both NPC structural components and of docking or interaction partners for transiently associated nuclear transport factors. POM152 is important for the de novo assembly of NPCs. The chain is Nucleoporin POM152 (POM152) from Saccharomyces cerevisiae (strain ATCC 204508 / S288c) (Baker's yeast).